A 148-amino-acid polypeptide reads, in one-letter code: UPF0260 protein KPN78578_22800 (148 aa).

It belongs to the UPF0260 family.

This is UPF0260 protein KPN78578_22800 from Klebsiella pneumoniae subsp. pneumoniae (strain ATCC 700721 / MGH 78578).